We begin with the raw amino-acid sequence, 265 residues long: Asparagine-rich protein (265 aa).

The first 21 residues, 1-21, serve as a signal peptide directing secretion; sequence MSRLTLLVLLVIAAVIQKVHG. Disordered stretches follow at residues 20–71 and 88–183; these read HGQG…NRNI and SNQN…NQQY. Composition is skewed to basic and acidic residues over residues 22-35 and 44-55; these read QGRENEKKNEHEPG and EKTERNLREPNR. Positions 88–98 are enriched in low complexity; the sequence is SNQNNFGNNRS. The span at 115-124 shows a compositional bias: basic and acidic residues; that stretch reads NKSEVEKENG. Residues 152-166 are compositionally biased toward basic residues; it reads KVQHRIAKRFQKRHP.

As to expression, nacreous layer of shell (at protein level). Expressed primarily in the mantle with highest level in the mantle pallium and lower level in the mantle edge.

It localises to the secreted. This is Asparagine-rich protein from Pinctada maxima (Silver-lipped pearl oyster).